The primary structure comprises 484 residues: 6-phosphogluconate dehydrogenase, decarboxylating (484 aa).

NADP(+)-binding positions include 11–16, 34–36, 76–78, and Asn104; these read GLAVMG, NRT, and VRA. Substrate-binding positions include Asn104 and 130–132; that span reads SGG. Lys185 functions as the Proton acceptor in the catalytic mechanism. 188–189 provides a ligand contact to substrate; it reads HN. The active-site Proton donor is the Glu192. The substrate site is built by Tyr193, Lys262, Arg289, Arg447, and His453.

Belongs to the 6-phosphogluconate dehydrogenase family. Homodimer.

It carries out the reaction 6-phospho-D-gluconate + NADP(+) = D-ribulose 5-phosphate + CO2 + NADPH. Its pathway is carbohydrate degradation; pentose phosphate pathway; D-ribulose 5-phosphate from D-glucose 6-phosphate (oxidative stage): step 3/3. Its function is as follows. Catalyzes the oxidative decarboxylation of 6-phosphogluconate to ribulose 5-phosphate and CO(2), with concomitant reduction of NADP to NADPH. This is 6-phosphogluconate dehydrogenase, decarboxylating (gnd) from Haemophilus influenzae (strain ATCC 51907 / DSM 11121 / KW20 / Rd).